The primary structure comprises 449 residues: GTP-binding protein A (449 aa).

Positions 1 to 77 (MFNINPYKSK…LSSKTENSLS (77 aa)) are disordered. Composition is skewed to low complexity over residues 8 to 46 (KSKT…SSSS) and 67 to 77 (SLSSKTENSLS). Residues 149–386 (QNECNVLLLG…FMGHLRAKNK (238 aa)) form the AIG1-type G domain. The segment at 158 to 165 (GRTGVGKS) is G1. 158 to 165 (GRTGVGKS) contributes to the GTP binding site. The segment at 183-187 (SCTQD) is G2. A G3 region spans residues 204-207 (DTPG). Positions 275–278 (TYAN) are G4. A G5 region spans residues 336 to 338 (ENS).

The protein belongs to the TRAFAC class TrmE-Era-EngA-EngB-Septin-like GTPase superfamily. AIG1/Toc34/Toc159-like paraseptin GTPase family. IAN subfamily.

In Dictyostelium discoideum (Social amoeba), this protein is GTP-binding protein A (gtpA).